A 67-amino-acid polypeptide reads, in one-letter code: Large ribosomal subunit protein bL35 (67 aa).

This sequence belongs to the bacterial ribosomal protein bL35 family.

The protein is Large ribosomal subunit protein bL35 of Leptothrix cholodnii (strain ATCC 51168 / LMG 8142 / SP-6) (Leptothrix discophora (strain SP-6)).